The sequence spans 528 residues: NAD(P)H-quinone oxidoreductase chain 4 1 (528 aa).

The next 14 helical transmembrane spans lie at 7 to 27 (FPWL…IPLI), 32 to 52 (WVRW…AYVF), 86 to 106 (LSLP…VAAW), 114 to 134 (LFFF…LAQD), 136 to 156 (LLFF…ISIW), 168 to 188 (FILY…AMAF), 208 to 228 (ALEL…LPIF), 242 to 262 (SAPI…YGLI), 276 to 296 (FAPV…LAAF), 310 to 330 (IAHM…GING), 331 to 351 (AVLQ…LTGI), 375 to 395 (FALF…SGFV), 417 to 437 (GIAL…LSML), and 463 to 483 (MAVA…PRLA).

This sequence belongs to the complex I subunit 4 family.

Its subcellular location is the cellular thylakoid membrane. The enzyme catalyses a plastoquinone + NADH + (n+1) H(+)(in) = a plastoquinol + NAD(+) + n H(+)(out). It catalyses the reaction a plastoquinone + NADPH + (n+1) H(+)(in) = a plastoquinol + NADP(+) + n H(+)(out). Its function is as follows. NDH-1 shuttles electrons from NAD(P)H, via FMN and iron-sulfur (Fe-S) centers, to quinones in the respiratory chain. The immediate electron acceptor for the enzyme in this species is believed to be plastoquinone. Couples the redox reaction to proton translocation (for every two electrons transferred, four hydrogen ions are translocated across the cytoplasmic membrane), and thus conserves the redox energy in a proton gradient. The chain is NAD(P)H-quinone oxidoreductase chain 4 1 from Synechococcus sp. (strain JA-2-3B'a(2-13)) (Cyanobacteria bacterium Yellowstone B-Prime).